The chain runs to 321 residues: D-alanine--D-alanine ligase (321 aa).

The ATP-grasp domain maps to 121-315; it reads RSCFLKNNIN…FTNLIEEIIK (195 aa). 148 to 199 is a binding site for ATP; it reads MKRPYVIKPLKQGSSIGVEVIFEEDDFHFIDYDFPYGEDIIIEQYIQGQELQ. Mg(2+) is bound by residues Glu-268, Glu-282, and Asn-284.

Belongs to the D-alanine--D-alanine ligase family. Mg(2+) serves as cofactor. It depends on Mn(2+) as a cofactor.

It is found in the cytoplasm. It carries out the reaction 2 D-alanine + ATP = D-alanyl-D-alanine + ADP + phosphate + H(+). Its pathway is cell wall biogenesis; peptidoglycan biosynthesis. Cell wall formation. In Rickettsia typhi (strain ATCC VR-144 / Wilmington), this protein is D-alanine--D-alanine ligase.